The chain runs to 357 residues: tRNA/tmRNA (uracil-C(5))-methyltransferase (357 aa).

5 residues coordinate S-adenosyl-L-methionine: glutamine 180, tyrosine 209, asparagine 214, glutamate 230, and aspartate 290. Catalysis depends on cysteine 315, which acts as the Nucleophile. Catalysis depends on glutamate 349, which acts as the Proton acceptor.

Belongs to the class I-like SAM-binding methyltransferase superfamily. RNA M5U methyltransferase family. TrmA subfamily.

The catalysed reaction is uridine(54) in tRNA + S-adenosyl-L-methionine = 5-methyluridine(54) in tRNA + S-adenosyl-L-homocysteine + H(+). It catalyses the reaction uridine(341) in tmRNA + S-adenosyl-L-methionine = 5-methyluridine(341) in tmRNA + S-adenosyl-L-homocysteine + H(+). Its function is as follows. Dual-specificity methyltransferase that catalyzes the formation of 5-methyluridine at position 54 (m5U54) in all tRNAs, and that of position 341 (m5U341) in tmRNA (transfer-mRNA). The sequence is that of tRNA/tmRNA (uracil-C(5))-methyltransferase from Campylobacter jejuni (strain RM1221).